The sequence spans 639 residues: Polypeptide N-acetylgalactosaminyltransferase 15 (639 aa).

Topologically, residues 1-11 are cytoplasmic; sequence MLLRKRYRHRP. Residues 12–34 traverse the membrane as a helical; Signal-anchor for type II membrane protein segment; sequence CRLQFLLLLLMLGCVLMMVAMLH. The Lumenal portion of the chain corresponds to 35–639; it reads PPHHTLHQTV…FDQINAVDER (605 aa). The interval 106-155 is disordered; that stretch reads RNQSQGRRGGSYRLIKQPRRQDKEAPKRDWGADEDGEVSEEEELTPFSLD. A glycan (N-linked (GlcNAc...) asparagine) is linked at asparagine 107. Basic and acidic residues predominate over residues 124–136; it reads RRQDKEAPKRDWG. A compositionally biased stretch (acidic residues) spans 137-149; sequence ADEDGEVSEEEEL. 5 cysteine pairs are disulfide-bonded: cysteine 181-cysteine 412, cysteine 403-cysteine 482, cysteine 517-cysteine 536, cysteine 562-cysteine 575, and cysteine 603-cysteine 620. The catalytic subdomain A stretch occupies residues 190–299; the sequence is LPTASVILCF…PGWLEPLLSR (110 aa). Aspartate 231 and arginine 260 together coordinate substrate. Residues aspartate 283, histidine 285, and histidine 417 each contribute to the Mn(2+) site. The tract at residues 358 to 420 is catalytic subdomain B; that stretch reads PIRSPVVPGE…PCSRVGHIYQ (63 aa). One can recognise a Ricin B-type lectin domain in the interval 504-631; it reads SFSGKLHNTG…GKARQQWRFD (128 aa). Asparagine 574 is a glycosylation site (N-linked (GlcNAc...) asparagine).

Belongs to the glycosyltransferase 2 family. GalNAc-T subfamily. The cofactor is Mn(2+). In terms of tissue distribution, widely expressed. Highly expressed in small intestine, placenta, spleen, cerebral cortex and ovary. Expressed at intermediate level in uterus, mammary gland, stomach, cerebellum and whole brain. Weakly expressed in fetal brain, bone marrow, thyroid gland, thymus, heart, skeletal muscle, lung, liver, colon, pancreas, kidney and testis. Not expressed in leukocyte. Expressed in both normal and osteoarthritic cartilage. Expressed at low level in chondrocytes in all zones of both normal and osteoarthritic cartilage.

It is found in the golgi apparatus membrane. The enzyme catalyses L-seryl-[protein] + UDP-N-acetyl-alpha-D-galactosamine = a 3-O-[N-acetyl-alpha-D-galactosaminyl]-L-seryl-[protein] + UDP + H(+). It catalyses the reaction L-threonyl-[protein] + UDP-N-acetyl-alpha-D-galactosamine = a 3-O-[N-acetyl-alpha-D-galactosaminyl]-L-threonyl-[protein] + UDP + H(+). Its pathway is protein modification; protein glycosylation. Catalyzes the initial reaction in O-linked oligosaccharide biosynthesis, the transfer of an N-acetyl-D-galactosamine residue to a serine or threonine residue on the protein receptor. Although it displays a much weaker activity toward all substrates tested compared to GALNT2, it is able to transfer up to seven GalNAc residues to the Muc5AC peptide, suggesting that it can fill vicinal Thr/Ser residues in cooperation with other GALNT proteins. Prefers Muc1a as substrate. The chain is Polypeptide N-acetylgalactosaminyltransferase 15 (GALNT15) from Homo sapiens (Human).